A 175-amino-acid chain; its full sequence is Ribosome maturation factor RimM (175 aa).

The 75-residue stretch at 100-174 folds into the PRC barrel domain; sequence EDEYYWNDVI…VKHKIITVIW (75 aa).

This sequence belongs to the RimM family. In terms of assembly, binds ribosomal protein uS19.

Its subcellular location is the cytoplasm. Functionally, an accessory protein needed during the final step in the assembly of 30S ribosomal subunit, possibly for assembly of the head region. Essential for efficient processing of 16S rRNA. May be needed both before and after RbfA during the maturation of 16S rRNA. It has affinity for free ribosomal 30S subunits but not for 70S ribosomes. This chain is Ribosome maturation factor RimM, found in Buchnera aphidicola subsp. Schizaphis graminum (strain Sg).